The primary structure comprises 633 residues: DNA topoisomerase 4 subunit B (633 aa).

ATP is bound by residues Tyr-5, Asn-45, Asp-72, 113-119 (GLHGVGA), and Lys-337. The Toprim domain occupies 419 to 534 (KELFIVEGDS…LGHVYLALPP (116 aa)). Mg(2+) is bound by residues Glu-425, Asp-499, and Asp-501.

It belongs to the type II topoisomerase family. ParE type 2 subfamily. In terms of assembly, heterotetramer composed of ParC and ParE. It depends on Mg(2+) as a cofactor. Requires Mn(2+) as cofactor. The cofactor is Ca(2+).

It catalyses the reaction ATP-dependent breakage, passage and rejoining of double-stranded DNA.. Topoisomerase IV is essential for chromosome segregation. It relaxes supercoiled DNA. Performs the decatenation events required during the replication of a circular DNA molecule. The chain is DNA topoisomerase 4 subunit B from Mycoplasma genitalium (strain ATCC 33530 / DSM 19775 / NCTC 10195 / G37) (Mycoplasmoides genitalium).